The following is a 1196-amino-acid chain: DNA-directed RNA polymerase subunit beta (1196 aa).

The protein belongs to the RNA polymerase beta chain family. The RNAP catalytic core consists of 2 alpha, 1 beta, 1 beta' and 1 omega subunit. When a sigma factor is associated with the core the holoenzyme is formed, which can initiate transcription.

It catalyses the reaction RNA(n) + a ribonucleoside 5'-triphosphate = RNA(n+1) + diphosphate. DNA-dependent RNA polymerase catalyzes the transcription of DNA into RNA using the four ribonucleoside triphosphates as substrates. This Lactococcus lactis subsp. cremoris (strain SK11) protein is DNA-directed RNA polymerase subunit beta.